Here is a 308-residue protein sequence, read N- to C-terminus: HTH-type transcriptional activator AllS (308 aa).

Residues phenylalanine 2 to threonine 59 form the HTH lysR-type domain. The H-T-H motif DNA-binding region spans phenylalanine 19–lysine 38.

Belongs to the LysR transcriptional regulatory family.

Its function is as follows. Positive regulator essential for the expression of allD operon. Binds to the allD promoter. This chain is HTH-type transcriptional activator AllS (allS), found in Escherichia coli O6:K15:H31 (strain 536 / UPEC).